The chain runs to 542 residues: Probable protein kinase UbiB (542 aa).

Residues 123-505 enclose the Protein kinase domain; the sequence is DFDEQALASA…ADNKTYNVKM (383 aa). Residues 129–137 and Lys156 contribute to the ATP site; that span reads LASASIAQV. Catalysis depends on Asp291, which acts as the Proton acceptor. The helical transmembrane segment at 506–526 threads the bilayer; that stretch reads IIMGSIILSLLWQFNSLPLWL.

This sequence belongs to the ABC1 family. UbiB subfamily.

It localises to the cell inner membrane. The protein operates within cofactor biosynthesis; ubiquinone biosynthesis [regulation]. Its function is as follows. Is probably a protein kinase regulator of UbiI activity which is involved in aerobic coenzyme Q (ubiquinone) biosynthesis. The chain is Probable protein kinase UbiB from Haemophilus ducreyi (strain 35000HP / ATCC 700724).